A 518-amino-acid chain; its full sequence is Protein nucleotidyltransferase YdiU (518 aa).

ATP contacts are provided by glycine 100, glycine 102, arginine 103, lysine 123, aspartate 135, glycine 136, arginine 193, and arginine 200. The Proton acceptor role is filled by aspartate 270. Residues asparagine 271 and aspartate 280 each contribute to the Mg(2+) site. Residue aspartate 280 coordinates ATP.

It belongs to the SELO family. Requires Mg(2+) as cofactor. Mn(2+) serves as cofactor.

The enzyme catalyses L-seryl-[protein] + ATP = 3-O-(5'-adenylyl)-L-seryl-[protein] + diphosphate. It catalyses the reaction L-threonyl-[protein] + ATP = 3-O-(5'-adenylyl)-L-threonyl-[protein] + diphosphate. It carries out the reaction L-tyrosyl-[protein] + ATP = O-(5'-adenylyl)-L-tyrosyl-[protein] + diphosphate. The catalysed reaction is L-histidyl-[protein] + UTP = N(tele)-(5'-uridylyl)-L-histidyl-[protein] + diphosphate. The enzyme catalyses L-seryl-[protein] + UTP = O-(5'-uridylyl)-L-seryl-[protein] + diphosphate. It catalyses the reaction L-tyrosyl-[protein] + UTP = O-(5'-uridylyl)-L-tyrosyl-[protein] + diphosphate. Functionally, nucleotidyltransferase involved in the post-translational modification of proteins. It can catalyze the addition of adenosine monophosphate (AMP) or uridine monophosphate (UMP) to a protein, resulting in modifications known as AMPylation and UMPylation. This is Protein nucleotidyltransferase YdiU from Xanthomonas oryzae pv. oryzae (strain MAFF 311018).